Consider the following 468-residue polypeptide: 3-isopropylmalate dehydratase large subunit (468 aa).

Residues Cys349, Cys409, and Cys412 each coordinate [4Fe-4S] cluster.

This sequence belongs to the aconitase/IPM isomerase family. LeuC type 1 subfamily. In terms of assembly, heterodimer of LeuC and LeuD. [4Fe-4S] cluster serves as cofactor.

It carries out the reaction (2R,3S)-3-isopropylmalate = (2S)-2-isopropylmalate. The protein operates within amino-acid biosynthesis; L-leucine biosynthesis; L-leucine from 3-methyl-2-oxobutanoate: step 2/4. Its function is as follows. Catalyzes the isomerization between 2-isopropylmalate and 3-isopropylmalate, via the formation of 2-isopropylmaleate. The sequence is that of 3-isopropylmalate dehydratase large subunit from Shewanella baltica (strain OS155 / ATCC BAA-1091).